The sequence spans 141 residues: Large ribosomal subunit protein uL11 (141 aa).

It belongs to the universal ribosomal protein uL11 family. Part of the ribosomal stalk of the 50S ribosomal subunit. Interacts with L10 and the large rRNA to form the base of the stalk. L10 forms an elongated spine to which L12 dimers bind in a sequential fashion forming a multimeric L10(L12)X complex. One or more lysine residues are methylated.

Its function is as follows. Forms part of the ribosomal stalk which helps the ribosome interact with GTP-bound translation factors. The protein is Large ribosomal subunit protein uL11 of Streptococcus mutans serotype c (strain ATCC 700610 / UA159).